Reading from the N-terminus, the 232-residue chain is Orotidine 5'-phosphate decarboxylase (232 aa).

Substrate contacts are provided by residues D16, K38, 65-74, T119, R180, Q189, G209, and R210; that span reads DLKLHDIGNT. K67 functions as the Proton donor in the catalytic mechanism.

Belongs to the OMP decarboxylase family. Type 1 subfamily. As to quaternary structure, homodimer.

It carries out the reaction orotidine 5'-phosphate + H(+) = UMP + CO2. The protein operates within pyrimidine metabolism; UMP biosynthesis via de novo pathway; UMP from orotate: step 2/2. Catalyzes the decarboxylation of orotidine 5'-monophosphate (OMP) to uridine 5'-monophosphate (UMP). This Methylorubrum extorquens (strain PA1) (Methylobacterium extorquens) protein is Orotidine 5'-phosphate decarboxylase.